Here is a 328-residue protein sequence, read N- to C-terminus: L-serine dehydratase/L-threonine deaminase (328 aa).

Lysine 41 is subject to N6-(pyridoxal phosphate)lysine. Proline 128 is a binding site for pyridoxal 5'-phosphate.

The protein belongs to the serine/threonine dehydratase family. In terms of assembly, homodimer. The cofactor is pyridoxal 5'-phosphate. In terms of tissue distribution, predominantly expressed in the perivenous regions of the liver.

Its subcellular location is the cytoplasm. It carries out the reaction L-serine = pyruvate + NH4(+). It catalyses the reaction L-threonine = 2-oxobutanoate + NH4(+). It functions in the pathway carbohydrate biosynthesis; gluconeogenesis. Catalyzes the pyridoxal-phosphate-dependent dehydrative deamination of L-threonine and L-serine to ammonia and alpha-ketobutyrate and pyruvate, respectively. This is L-serine dehydratase/L-threonine deaminase (SDS) from Homo sapiens (Human).